A 189-amino-acid polypeptide reads, in one-letter code: Phosphoheptose isomerase (189 aa).

One can recognise an SIS domain in the interval 34–189 (VADTLKNGKK…CQAVDEAFRG (156 aa)). A substrate-binding site is contributed by 49–51 (NGG). Positions 58 and 62 each coordinate Zn(2+). Substrate is bound by residues Glu-62, 91-92 (ND), 117-119 (STS), Ser-122, and Gln-169. The Zn(2+) site is built by Gln-169 and His-177.

Belongs to the SIS family. GmhA subfamily. In terms of assembly, homotetramer. Requires Zn(2+) as cofactor.

The protein localises to the cytoplasm. It carries out the reaction 2 D-sedoheptulose 7-phosphate = D-glycero-alpha-D-manno-heptose 7-phosphate + D-glycero-beta-D-manno-heptose 7-phosphate. It participates in carbohydrate biosynthesis; D-glycero-D-manno-heptose 7-phosphate biosynthesis; D-glycero-alpha-D-manno-heptose 7-phosphate and D-glycero-beta-D-manno-heptose 7-phosphate from sedoheptulose 7-phosphate: step 1/1. Catalyzes the isomerization of sedoheptulose 7-phosphate in D-glycero-D-manno-heptose 7-phosphate. This chain is Phosphoheptose isomerase, found in Campylobacter concisus (strain 13826).